Here is a 227-residue protein sequence, read N- to C-terminus: ATP-dependent dethiobiotin synthetase BioD (227 aa).

13–18 contacts ATP; the sequence is DIGKTY. Thr-17 lines the Mg(2+) pocket. Lys-38 is a catalytic residue. Ser-42 is a binding site for substrate. Residues Asp-55, 116–119, and 179–180 each bind ATP; these read EGSG and NN. Asp-55 and Glu-116 together coordinate Mg(2+).

It belongs to the dethiobiotin synthetase family. Homodimer. Mg(2+) is required as a cofactor.

The protein resides in the cytoplasm. The enzyme catalyses (7R,8S)-7,8-diammoniononanoate + CO2 + ATP = (4R,5S)-dethiobiotin + ADP + phosphate + 3 H(+). It participates in cofactor biosynthesis; biotin biosynthesis; biotin from 7,8-diaminononanoate: step 1/2. In terms of biological role, catalyzes a mechanistically unusual reaction, the ATP-dependent insertion of CO2 between the N7 and N8 nitrogen atoms of 7,8-diaminopelargonic acid (DAPA, also called 7,8-diammoniononanoate) to form a ureido ring. This is ATP-dependent dethiobiotin synthetase BioD from Clostridium botulinum (strain Kyoto / Type A2).